The chain runs to 274 residues: Dermonecrotic toxin LarSicTox-alphaIV1 (274 aa).

The active site involves H5. Residues E25 and D27 each contribute to the Mg(2+) site. H41 functions as the Nucleophile in the catalytic mechanism. Disulfide bonds link C45–C51 and C47–C192. D85 is a Mg(2+) binding site.

Belongs to the arthropod phospholipase D family. Class II subfamily. Requires Mg(2+) as cofactor. As to expression, expressed by the venom gland.

It is found in the secreted. It carries out the reaction an N-(acyl)-sphingosylphosphocholine = an N-(acyl)-sphingosyl-1,3-cyclic phosphate + choline. It catalyses the reaction an N-(acyl)-sphingosylphosphoethanolamine = an N-(acyl)-sphingosyl-1,3-cyclic phosphate + ethanolamine. The catalysed reaction is a 1-acyl-sn-glycero-3-phosphocholine = a 1-acyl-sn-glycero-2,3-cyclic phosphate + choline. The enzyme catalyses a 1-acyl-sn-glycero-3-phosphoethanolamine = a 1-acyl-sn-glycero-2,3-cyclic phosphate + ethanolamine. Functionally, dermonecrotic toxins cleave the phosphodiester linkage between the phosphate and headgroup of certain phospholipids (sphingolipid and lysolipid substrates), forming an alcohol (often choline) and a cyclic phosphate. This toxin acts on sphingomyelin (SM). It may also act on ceramide phosphoethanolamine (CPE), lysophosphatidylcholine (LPC) and lysophosphatidylethanolamine (LPE), but not on lysophosphatidylserine (LPS), and lysophosphatidylglycerol (LPG). It acts by transphosphatidylation, releasing exclusively cyclic phosphate products as second products. Induces dermonecrosis, hemolysis, increased vascular permeability, edema, inflammatory response, and platelet aggregation. The sequence is that of Dermonecrotic toxin LarSicTox-alphaIV1 from Loxosceles arizonica (Arizona brown spider).